The following is a 37-amino-acid chain: Large ribosomal subunit protein bL36 (37 aa).

This sequence belongs to the bacterial ribosomal protein bL36 family.

The protein is Large ribosomal subunit protein bL36 of Moorella thermoacetica (strain ATCC 39073 / JCM 9320).